The chain runs to 118 residues: MSKKENIIGNKNRTQKYNNACLTRSDVYALVKETINKRKHDGEFCNITAHIFDEGFEQQKEYIREKLSTASIVTDCRQNRKRLALHRKKIESIFNIHTSLQEEFNSCSRRYNGSPNLE.

It belongs to the baculoviridae LEF-11 family.

Involved in late/very late gene activation. This chain is Late expression factor 11 (LEF-11), found in Adoxophyes honmai nucleopolyhedrovirus.